The chain runs to 252 residues: MLPELLLARVLHPRAVICSFAIPGDPGDTCDTLSDRWGITIDIFKSLNPGVNCPNLVANMEYCVAGTVSPDTPSTTTTAKPTMTPTSTPTKTTTTSTATTTRAMTTTISSDAPSPTQPGLAKDCDKFHLVVSGDNCYSIQTKYGISTDQFKAWNPYINAECSNLWADYYVCVHVPGATISTSMPMPTPSGPQPQMPGIVSNCRKFHLIQAGDNCYTINQAVGITLAQFRSWNKNVNADCSNIWLGYYVCIGV.

A LysM 1 domain is found at 20-64 (FAIPGDPGDTCDTLSDRWGITIDIFKSLNPGVNCPNLVANMEYCV). The segment at 71 to 98 (DTPSTTTTAKPTMTPTSTPTKTTTTSTA) is disordered. The segment covering 72–98 (TPSTTTTAKPTMTPTSTPTKTTTTSTA) has biased composition (low complexity). LysM domains are found at residues 126-172 (KFHL…YVCV) and 204-250 (KFHL…YVCI).

The protein belongs to the secreted LysM effector family.

The protein localises to the secreted. Its subcellular location is the cell wall. Functionally, secreted effector that binds two substrates, chitin and N-linked oligosaccharides associated with human skin glycoproteins. Could provide the pathogen with three important functions including shielding host cell wall chitin from the human immune system, shielding the pathogen's glycoproteins from host degradation and immune surveillance, and helping facilitate pathogen adhesion to human skin. The polypeptide is Secreted LysM effector LysM1 (Trichophyton rubrum (strain ATCC MYA-4607 / CBS 118892) (Athlete's foot fungus)).